The following is a 706-amino-acid chain: Maternal embryonic leucine zipper kinase (706 aa).

The 255-residue stretch at 11-265 (YAVHDELGSG…VKKLLEHDWL (255 aa)) folds into the Protein kinase domain. Residues 17–25 (LGSGGFGKV) and K40 contribute to the ATP site. D132 (proton acceptor) is an active-site residue. Disordered stretches follow at residues 366 to 386 (LDKS…SSSD), 433 to 493 (FTGR…SRGP), and 506 to 555 (SVYT…IGSA). Composition is skewed to polar residues over residues 447-461 (SVRS…SAAT) and 506-515 (SVYTTPNTRP). In terms of domain architecture, KA1 spans 656–705 (QETVHGWMTVELEIVRLQMFDKVGIRRKRLKGDAFMYKKVCEKILQMAKI).

Belongs to the protein kinase superfamily. CAMK Ser/Thr protein kinase family. SNF1 subfamily. In terms of processing, may be phosphorylated at Thr-169 by par-4 and/or autophosphorylated which likely results in its activation. Phosphorylation is not required for co-localization with the centrosome.

It localises to the cytoplasm. It is found in the cytoskeleton. Its subcellular location is the microtubule organizing center. The protein resides in the centrosome. It catalyses the reaction L-seryl-[protein] + ATP = O-phospho-L-seryl-[protein] + ADP + H(+). The catalysed reaction is L-threonyl-[protein] + ATP = O-phospho-L-threonyl-[protein] + ADP + H(+). Its function is as follows. Serine/threonine-protein kinase involved in cell autonomous neuroblast asymmetric divisions that generate one precursor cell and one apoptotic cell by controlling spindle positioning, myosin distribution and the segregation of cell fate determinants. Plays a role in neural fate specification in several dopaminergic linages, acting in concert with ham-1. Involved in phosphorylation of multiple proteins associated with key developmental processes, including the cell cycle, apoptosis, endocytosis, and asymmetric cell division. Promotes cell shedding during embryogenesis, probably through the endocytosis-mediated removal of cell adhesion molecules such as hmp-1 from the cell surface. May act downstream of par-4/strd-1/mop-25 to regulate cell shedding. The chain is Maternal embryonic leucine zipper kinase from Caenorhabditis elegans.